The chain runs to 335 residues: [Citrate [pro-3S]-lyase] ligase (335 aa).

An N-acetyltransferase domain is found at 1–131 (MQFERISTEQ…SATRLQKQCS (131 aa)).

The enzyme catalyses holo-[citrate lyase ACP] + acetate + ATP = acetyl-[citrate lyase ACP] + AMP + diphosphate. Its function is as follows. Acetylation of prosthetic group (2-(5''-phosphoribosyl)-3'-dephosphocoenzyme-A) of the gamma subunit of citrate lyase. The polypeptide is [Citrate [pro-3S]-lyase] ligase (citC) (Haemophilus influenzae (strain ATCC 51907 / DSM 11121 / KW20 / Rd)).